The primary structure comprises 319 residues: Chromoplast-specific carotenoid-associated protein C2, chromoplastic (319 aa).

The transit peptide at 1 to 55 (MTSIAFCNAFTVNPFLAAARRSPPPLTPLTSVALSPARKPRILAIFHPRTFPSFR) directs the protein to the chromoplast.

This sequence belongs to the PAP/fibrillin family.

The protein resides in the plastid. Its subcellular location is the chromoplast. Its function is as follows. May be involved in carotenoid sequestration within chromoplasts. This is Chromoplast-specific carotenoid-associated protein C2, chromoplastic (CHRC2) from Oncidium hybrid cultivar (Orchid).